The sequence spans 240 residues: Probable transcriptional regulatory protein MS53_0373 (240 aa).

It belongs to the TACO1 family.

It localises to the cytoplasm. The sequence is that of Probable transcriptional regulatory protein MS53_0373 from Mycoplasmopsis synoviae (strain 53) (Mycoplasma synoviae).